Reading from the N-terminus, the 30-residue chain is Propionyl-CoA carboxylase alpha chain (30 aa).

One can recognise a Biotin carboxylation domain in the interval 1–30; that stretch reads PKIRKVLVANRGEIAIRVMRTXKELGIATV.

As to quaternary structure, dodecamer composed of six biotin-containing alpha subunits and six beta subunits. It depends on Mg(2+) as a cofactor. Requires Mn(2+) as cofactor. Biotin serves as cofactor.

The enzyme catalyses propanoyl-CoA + hydrogencarbonate + ATP = (S)-methylmalonyl-CoA + ADP + phosphate + H(+). Its pathway is metabolic intermediate metabolism; propanoyl-CoA degradation; succinyl-CoA from propanoyl-CoA: step 1/3. Functionally, this is one of the 2 subunits of the biotin-dependent propionyl-CoA carboxylase (PCC), the enzyme catalyzing the carboxylation of propionyl-CoA/propanoyl-CoA to D-methylmalonyl-CoA/(S)-methylmalonyl-CoA. Within the holoenzyme, the alpha subunit catalyzes the ATP-dependent carboxylation of the biotin carried by the biotin carboxyl carrier (BCC) domain, while the beta subunit then transfers the carboxyl group from carboxylated biotin to propionyl-CoA. Propionyl-CoA carboxylase also carboxylates acetyl-CoA, butyryl-CoA and succinyl-CoA. This chain is Propionyl-CoA carboxylase alpha chain, found in Myxococcus xanthus.